The sequence spans 483 residues: Proline--tRNA ligase (483 aa).

The protein belongs to the class-II aminoacyl-tRNA synthetase family. ProS type 3 subfamily. In terms of assembly, homodimer.

The protein localises to the cytoplasm. It catalyses the reaction tRNA(Pro) + L-proline + ATP = L-prolyl-tRNA(Pro) + AMP + diphosphate. Its function is as follows. Catalyzes the attachment of proline to tRNA(Pro) in a two-step reaction: proline is first activated by ATP to form Pro-AMP and then transferred to the acceptor end of tRNA(Pro). In Natranaerobius thermophilus (strain ATCC BAA-1301 / DSM 18059 / JW/NM-WN-LF), this protein is Proline--tRNA ligase.